Here is a 94-residue protein sequence, read N- to C-terminus: DNA-directed RNA polymerase subunit omega (94 aa).

It belongs to the RNA polymerase subunit omega family. In terms of assembly, the RNAP catalytic core consists of 2 alpha, 1 beta, 1 beta' and 1 omega subunit. When a sigma factor is associated with the core the holoenzyme is formed, which can initiate transcription.

It catalyses the reaction RNA(n) + a ribonucleoside 5'-triphosphate = RNA(n+1) + diphosphate. Functionally, promotes RNA polymerase assembly. Latches the N- and C-terminal regions of the beta' subunit thereby facilitating its interaction with the beta and alpha subunits. The protein is DNA-directed RNA polymerase subunit omega of Frankia alni (strain DSM 45986 / CECT 9034 / ACN14a).